A 1167-amino-acid chain; its full sequence is White collar 1 protein (1167 aa).

Disordered stretches follow at residues 1 to 91 and 307 to 355; these read MNNN…MSGG and STPA…GASQ. A compositionally biased stretch (low complexity) spans 21-57; that stretch reads QHQQQQQQQQQQQQQQQQQQQQQQQQQQQQHQHQQQQ. Composition is skewed to polar residues over residues 70 to 91 and 307 to 325; these read TPPT…MSGG and STPA…TQTI. Residues 335–348 are compositionally biased toward low complexity; the sequence is VTNAPTPAPFTSTP. One can recognise a PAS 1 domain in the interval 381-452; that stretch reads KLKLGAVDMS…KREFVENNAV (72 aa). Cys428 carries the S-4a-FMN cysteine modification. The region spanning 469–508 is the PAC 1 domain; the sequence is LINYRKGGKPFLNLLTMIPIPWDTEEIRYFIGFQIDLVEC. The region spanning 574–644 is the PAS 2 domain; sequence KQSWDKMLLE…RELKEAQQHT (71 aa). The 42-residue stretch at 650-691 folds into the PAC 2 domain; the sequence is FRIRRKNSGYTWFESHGTLFNEQGKGRKCIILVGRKRPVFAL. Residues 693–763 enclose the PAS 3 domain; sequence RKDLELNGGI…RTIEKARKGK (71 aa). Over residues 849-861 the composition is skewed to low complexity; sequence MSKSGSSDSTGAM. Disordered stretches follow at residues 849–872, 918–952, 966–1047, and 1060–1167; these read MSKS…GPGQ, KKKR…PSGN, QTGR…TGST, and VNAL…GLSV. The GATA-type zinc finger occupies 934–959; it reads CANCHTRNTPEWRRGPSGNRDLCNSC. Over residues 968–977 the composition is skewed to polar residues; it reads GRVSPRTSSR. The segment covering 986-995 has biased composition (low complexity); that stretch reads KKSNSPSHSS. Residues 1004 to 1033 are compositionally biased toward polar residues; sequence DSPSTTTATKNSPSLRGSSTTAPGTITTDS. Low complexity-rich tracts occupy residues 1036–1047 and 1104–1128; these read AVASSASGTGST and QHQQ…QQHQ.

As to quaternary structure, heterodimer of wc-1 and wc-2. Post-translationally, FMN binds covalently to cysteine after exposure to blue light and is reversed in the dark.

Its subcellular location is the nucleus. Its function is as follows. May function as a transcription factor involved in light regulation. Binds and affects blue light regulation of the al-3 gene. Wc-1 and wc-2 proteins interact via homologous PAS domains, bind to promoters of light regulated genes such as frq, and activate transcription. This is White collar 1 protein (wc-1) from Neurospora crassa (strain ATCC 24698 / 74-OR23-1A / CBS 708.71 / DSM 1257 / FGSC 987).